A 358-amino-acid chain; its full sequence is Glycerol-3-phosphate dehydrogenase [NAD(P)+] (358 aa).

4 residues coordinate NADPH: serine 33, phenylalanine 34, arginine 54, and lysine 128. Residues lysine 128 and glycine 156 each coordinate sn-glycerol 3-phosphate. Residue alanine 160 participates in NADPH binding. Lysine 211, aspartate 264, serine 274, arginine 275, and asparagine 276 together coordinate sn-glycerol 3-phosphate. Lysine 211 serves as the catalytic Proton acceptor. Residue arginine 275 participates in NADPH binding. NADPH is bound by residues valine 299 and glutamate 301.

Belongs to the NAD-dependent glycerol-3-phosphate dehydrogenase family.

Its subcellular location is the cytoplasm. It catalyses the reaction sn-glycerol 3-phosphate + NAD(+) = dihydroxyacetone phosphate + NADH + H(+). The enzyme catalyses sn-glycerol 3-phosphate + NADP(+) = dihydroxyacetone phosphate + NADPH + H(+). The protein operates within membrane lipid metabolism; glycerophospholipid metabolism. Its function is as follows. Catalyzes the reduction of the glycolytic intermediate dihydroxyacetone phosphate (DHAP) to sn-glycerol 3-phosphate (G3P), the key precursor for phospholipid synthesis. This is Glycerol-3-phosphate dehydrogenase [NAD(P)+] from Saccharophagus degradans (strain 2-40 / ATCC 43961 / DSM 17024).